A 510-amino-acid polypeptide reads, in one-letter code: Protein disulfide-isomerase (510 aa).

The signal sequence occupies residues 1–19 (MLRRALLCLAVAAAPGLYA). The region spanning 20-136 (DAPEEEDHVL…IVNWLKKRTG (117 aa)) is the Thioredoxin 1 domain. Residues Cys55 and Cys58 each act as nucleophile in the active site. The cysteines at positions 55 and 58 are disulfide-linked. The residue at position 202 (Lys202) is an N6-acetyllysine. Residues Lys224 and Lys273 each carry the N6-succinyllysine modification. A phosphoserine mark is found at Ser333 and Ser359. The Thioredoxin 2 domain occupies 351–477 (GKIKPHLMSQ…FKKFLESGGQ (127 aa)). Active-site nucleophile residues include Cys399 and Cys402. Residues Cys399 and Cys402 are joined by a disulfide bond. Ser429 bears the Phosphoserine mark. Residues 473 to 510 (ESGGQDGAGDDDDLEDLEEAEEPDMEEDDDQKAVKDEL) are disordered. Positions 480 to 502 (AGDDDDLEDLEEAEEPDMEEDDD) are enriched in acidic residues. The Prevents secretion from ER signature appears at 507-510 (KDEL).

Belongs to the protein disulfide isomerase family. In terms of assembly, heterodimer; heterodimerizes with the protein microsomal triglyceride transfer MTTP. Homodimer. Homodimer. Monomers and homotetramers may also occur. Interacts with P4HA2, forming a heterotetramer consisting of 2 alpha subunits (P4HA2) and 2 beta (P4HB), where P4HB plays the role of a structural subunit; this tetramer catalyzes the formation of 4-hydroxyproline in collagen. Also constitutes the structural subunit of the microsomal triacylglycerol transfer protein MTTP in mammalian cells. Stabilizes both enzymes and retain them in the ER without contributing to the catalytic activity. Binds UBQLN1. Interacts with ERO1B. Interacts with ILDR2. Interacts with ERN1/IRE1A (via N-terminus); the interaction is enhanced by phosphorylation of P4HB by FAM20C in response to endoplasmic reticulum stress and results in attenuation of ERN1 activity. Phosphorylation of Ser-359 by FAM20C is induced by endoplasmic reticulum stress and results in a functional switch from oxidoreductase to molecular chaperone. It also promotes interaction with ERN1.

The protein localises to the endoplasmic reticulum. The protein resides in the endoplasmic reticulum lumen. Its subcellular location is the melanosome. It localises to the cell membrane. The catalysed reaction is Catalyzes the rearrangement of -S-S- bonds in proteins.. This multifunctional protein catalyzes the formation, breakage and rearrangement of disulfide bonds. At the cell surface, seems to act as a reductase that cleaves disulfide bonds of proteins attached to the cell. May therefore cause structural modifications of exofacial proteins. Inside the cell, seems to form/rearrange disulfide bonds of nascent proteins. At high concentrations and following phosphorylation by FAM20C, functions as a chaperone that inhibits aggregation of misfolded proteins. At low concentrations, facilitates aggregation (anti-chaperone activity). May be involved with other chaperones in the structural modification of the TG precursor in hormone biogenesis. Also acts as a structural subunit of various enzymes such as prolyl 4-hydroxylase and microsomal triacylglycerol transfer protein MTTP. Receptor for LGALS9; the interaction retains P4HB at the cell surface of Th2 T helper cells, increasing disulfide reductase activity at the plasma membrane, altering the plasma membrane redox state and enhancing cell migration. This is Protein disulfide-isomerase (P4HB) from Macaca fuscata fuscata (Japanese macaque).